Here is an 80-residue protein sequence, read N- to C-terminus: UPF0180 protein BPUM_1317 (80 aa).

The protein belongs to the UPF0180 family.

This is UPF0180 protein BPUM_1317 from Bacillus pumilus (strain SAFR-032).